The following is a 135-amino-acid chain: Small ribosomal subunit protein bS16 (135 aa).

Residues 82-135 form a disordered region; that stretch reads RPAETVGKAKQAAKREADAKQAAKEAAEAKAAAADEKAAEAEASDSAESESTEG. Positions 94 to 121 are enriched in basic and acidic residues; the sequence is AKREADAKQAAKEAAEAKAAAADEKAAE. The segment covering 123 to 135 has biased composition (acidic residues); that stretch reads EASDSAESESTEG.

It belongs to the bacterial ribosomal protein bS16 family.

The polypeptide is Small ribosomal subunit protein bS16 (Synechococcus sp. (strain CC9605)).